The chain runs to 315 residues: Prephenate dehydratase (315 aa).

A Prephenate dehydratase domain is found at 7–190; it reads VVAYLGPAGT…ARTRFVAVQA (184 aa). The region spanning 204-283 is the ACT domain; that stretch reads SVIFSLPNVP…LVFVGSWPSN (80 aa).

The enzyme catalyses prephenate + H(+) = 3-phenylpyruvate + CO2 + H2O. It participates in amino-acid biosynthesis; L-phenylalanine biosynthesis; phenylpyruvate from prephenate: step 1/1. This is Prephenate dehydratase (pheA) from Corynebacterium glutamicum (strain ATCC 13032 / DSM 20300 / JCM 1318 / BCRC 11384 / CCUG 27702 / LMG 3730 / NBRC 12168 / NCIMB 10025 / NRRL B-2784 / 534).